The sequence spans 1087 residues: MMTSVGTNRARGNWEQPQNQNQTQHKQRPQATAEQIRLAQMISDHNDADFEEKVKQLIDITGKNQDECVIALHDCNGDVNRAINVLLEGNPDTHSWEMVGKKKGVSGQKDGGQTESNEEGKENRDRDRDYSRRRGGPPRRGRGASRGREFRGQENGLDGTKSGGPSGRGTERGRRGRGRGRGGSGRRGGRFSAQGMGTFNPADYAEPANTDDNYGNSSGNTWNNTGHFEPDDGTSAWRTATEEWGTEDWNEDLSETKIFTASNVSSVPLPAENVTITAGQRIDLAVLLGKTPSTMENDSSNLDPSQAPSLAQPLVFSNSKQTAISQPASGNTFSHHSMVSMLGKGFGDVGEAKGGSTTGSQFLEQFKTAQALAQLAAQHSQSGSTTTSSWDMGSTTQSPSLVQYDLKNPSDSAVHSPFTKRQAFTPSSTMMEVFLQEKSPAVATSTAAPPPPSSPLPSKSTSAPQMSPGSSDNQSSSPQPAQQKLKQQKKKASLTSKIPALAVEMPGSADISGLNLQFGALQFGSEPVLSDYESTPTTSASSSQAPSSLYTSTASESSSTISSNQSQESGYQSGPIQSTTYTSQNNAQGPLYEQRSTQTRRYPSSISSSPQKDLTQAKNGFSSVQATQLQTTQSVEGATGSAVKSDSPSTSSIPPLNETVSAASLLTTTNQHSSSLGGLSHSEEIPNTTTTQHSSTLSTQQNTLSSSTSSGRTSTSTLLHTSVESEANLHSSSSTFSTTSSTVSAPPPVVSVSSSLNSGSSLGLSLGSNSTVTASTRSSVATTSGKAPPNLPPGVPPLLPNPYIMAPGLLHAYPPQVYGYDDLQMLQTRFPLDYYSIPFPTPTTPLTGRDGSLASNPYSGDLTKFGRGDASSPAPATTLAQPQQNQTQTHHTTQQTFLNPALPPGYSYTSLPYYTGVPGLPSTFQYGPAVFPVAPTSSKQHGVNVSVNASATPFQQPSGYGSHGYNTGVSVTSSNTGVPDISGSVYSKTQQSFEKQGFHSGTPAASFNLPSALGSGGPINPATAAAYPPAPFMHILTPHQQPHSQILHHHLQQDGQTGSGQRSQTSSIPQKPQTNKSAYNSYSWGAN.

Residue Met1 is modified to N-acetylmethionine. The disordered stretch occupies residues Met1–Ala33. The UBA domain occupies Asp49–Gly89. A disordered region spans residues Asp92–Thr234. The segment covering Glu118 to Arg132 has biased composition (basic and acidic residues). Residues Arg133–Ser145 are compositionally biased toward basic residues. An asymmetric dimethylarginine mark is found at Arg187 and Arg190. Residues Asn213–Gly226 show a composition bias toward low complexity. Phosphoserine is present on residues Ser356 and Ser360. A compositionally biased stretch (low complexity) spans Ala377 to Ser389. Positions Ala377–Lys420 are disordered. Residues Trp390–Leu401 are compositionally biased toward polar residues. Ser410 and Ser416 each carry phosphoserine. At Thr425 the chain carries Phosphothreonine. Ser439, Ser454, Ser467, Ser470, Ser471, and Ser477 each carry phosphoserine. Disordered stretches follow at residues Pro440–Ser493, Ser530–Leu656, and Thr669–Gly794. Composition is skewed to low complexity over residues Gln474–Leu485 and Ser534–Ser569. The span at Gly570–Leu656 shows a compositional bias: polar residues. A phosphoserine mark is found at Ser604, Ser605, Ser608, and Ser609. The segment covering Thr688–Ser784 has biased composition (low complexity). Residues Ser852 and Ser859 each carry the phosphoserine modification. The disordered stretch occupies residues Phe865–Ala901. Low complexity predominate over residues Pro873–Thr896. An omega-N-methylarginine mark is found at Ser962 and Val969. N6-acetyllysine occurs at positions 969 and 976. The interval Gln1040–Asn1087 is disordered. Positions Gln1053–Ser1067 are enriched in low complexity. Residues Ile1068 to Asn1087 are compositionally biased toward polar residues.

Interacts with BMI1. Part of a complex consisting of UBAP2L, BMI1 and RNF2. Interacts with G3BP1 (via NTF2 domain); promoting stress granule formation. In terms of processing, acetylated. As to expression, ubiquitous.

The protein resides in the nucleus. The protein localises to the chromosome. It localises to the cytoplasm. Its subcellular location is the stress granule. In terms of biological role, recruits the ubiquitination machinery to RNA polymerase II for polyubiquitination, removal and degradation, when the transcription-coupled nucleotide excision repair (TC-NER) machinery fails to resolve DNA damage. Plays an important role in the activity of long-term repopulating hematopoietic stem cells (LT-HSCs). Is a regulator of stress granule assembly, required for their efficient formation. Required for proper brain development and neocortex lamination. In Homo sapiens (Human), this protein is Ubiquitin-associated protein 2-like.